Reading from the N-terminus, the 382-residue chain is Alanine racemase (382 aa).

The active-site Proton acceptor; specific for D-alanine is K39. K39 is subject to N6-(pyridoxal phosphate)lysine. Residue R138 participates in substrate binding. Y265 serves as the catalytic Proton acceptor; specific for L-alanine. M312 contacts substrate.

The protein belongs to the alanine racemase family. Pyridoxal 5'-phosphate is required as a cofactor.

It catalyses the reaction L-alanine = D-alanine. It functions in the pathway amino-acid biosynthesis; D-alanine biosynthesis; D-alanine from L-alanine: step 1/1. Catalyzes the interconversion of L-alanine and D-alanine. May also act on other amino acids. The protein is Alanine racemase (alr) of Staphylococcus saprophyticus subsp. saprophyticus (strain ATCC 15305 / DSM 20229 / NCIMB 8711 / NCTC 7292 / S-41).